The primary structure comprises 31 residues: Cytochrome b6-f complex subunit 6 (31 aa).

A helical membrane pass occupies residues 4–24; the sequence is ILTYFGILFGILTITVIIFVA.

Belongs to the PetL family. In terms of assembly, the 4 large subunits of the cytochrome b6-f complex are cytochrome b6, subunit IV (17 kDa polypeptide, PetD), cytochrome f and the Rieske protein, while the 4 small subunits are PetG, PetL, PetM and PetN. The complex functions as a dimer.

It localises to the plastid. Its subcellular location is the chloroplast thylakoid membrane. Its function is as follows. Component of the cytochrome b6-f complex, which mediates electron transfer between photosystem II (PSII) and photosystem I (PSI), cyclic electron flow around PSI, and state transitions. PetL is important for photoautotrophic growth as well as for electron transfer efficiency and stability of the cytochrome b6-f complex. The protein is Cytochrome b6-f complex subunit 6 of Chaetosphaeridium globosum (Charophycean green alga).